The chain runs to 264 residues: Tritrans,polycis-undecaprenyl-diphosphate synthase (geranylgeranyl-diphosphate specific) (264 aa).

The active site involves D43. D43 contacts Mg(2+). Residues 44 to 47, W48, H60, and 88 to 90 contribute to the substrate site; these read GNRR and STE. N91 serves as the catalytic Proton acceptor. Residues F92, R94, R213, and 219–221 contribute to the substrate site; that span reads RIS. E232 is a Mg(2+) binding site.

This sequence belongs to the UPP synthase family. Homodimer. It depends on Mg(2+) as a cofactor.

The enzyme catalyses geranylgeranyl diphosphate + 7 isopentenyl diphosphate = tri-trans,hepta-cis-undecaprenyl diphosphate + 7 diphosphate. Its function is as follows. Catalyzes the sequential condensation of isopentenyl diphosphate (IPP) with geranylgeranyl diphosphate (GGPP) to yield (2Z,6Z,10Z,14Z,18Z,22Z,26Z,30E,34E,38E)-undecaprenyl diphosphate (tritrans,heptacis-UPP). It is probably the precursor of glycosyl carrier lipids. This chain is Tritrans,polycis-undecaprenyl-diphosphate synthase (geranylgeranyl-diphosphate specific), found in Pyrococcus horikoshii (strain ATCC 700860 / DSM 12428 / JCM 9974 / NBRC 100139 / OT-3).